Consider the following 474-residue polypeptide: Homeobox protein PKNOX2 (474 aa).

The tract at residues 1 to 42 (MMQHASPAPALTMMATQNVPPPPYQDSPQMTATAQPPSKAQA) is disordered. A compositionally biased stretch (polar residues) spans 26–38 (DSPQMTATAQPPS). The region spanning 96–179 (GSECITSASF…MHSDNLLRND (84 aa)) is the MEIS N-terminal domain. A DNA-binding region (homeobox) is located at residues 291-350 (KRGVLPKHATNIMRSWLFQHLMHPYPTEDEKRQIAAQTNLTLLQVNNWFINARRRILQPM). Disordered stretches follow at residues 351 to 371 (LDAS…QHRP), 385 to 405 (LQQQ…LDNL), and 423 to 474 (AAHD…DSLE). Over residues 361-371 (KAKKIKSQHRP) the composition is skewed to basic residues. Residues 429–456 (LDGTEEEDEDDMEEEEEEEEELEEEADE) show a composition bias toward acidic residues.

This sequence belongs to the TALE/MEIS homeobox family.

Its subcellular location is the nucleus. The protein is Homeobox protein PKNOX2 (Pknox2) of Mus musculus (Mouse).